A 378-amino-acid polypeptide reads, in one-letter code: MIIGVPKEIKNNENRVALTPGGVSQLISNGHRVLVETGAGLGSGFENEAYESAGAEIIADPKQVWDAEMVMKVKEPLPEEYVYFRKGLVLFTYLHLAAEPELAQALKDKGVTAIAYETVSEGRTLPLLTPMSEVAGRMAAQIGAQFLEKPKGGKGILLAGVPGVSRGKVTIIGGGVVGTNAAKMAVGLGADVTIIDLNADRLRQLDDIFGHQIKTLISNPVNIADAVAEADLLICAVLIPGAKAPTLVTEEMVKQMKPGSVIVDVAIDQGGIVETVDHITTHDQPTYEKHGVVHYAVANMPGAVPRTSTIALTNVTVPYALQIANKGAVKALADNTALRAGLNTANGHVTYEAVARDLGYEYVPAEKALQDESSVAGA.

Residues Arg-15 and Lys-74 each coordinate substrate. The active-site Proton donor/acceptor is His-95. Residues Ser-132, 176–177 (VV), Asp-196, Ser-218, 237–238 (VL), 265–268 (VAID), and 297–300 (VANM) contribute to the NAD(+) site. The Proton donor/acceptor role is filled by Asp-268.

The protein belongs to the AlaDH/PNT family. Homohexamer. Trimer of dimer.

It is found in the cytoplasm. It catalyses the reaction L-alanine + NAD(+) + H2O = pyruvate + NH4(+) + NADH + H(+). It functions in the pathway amino-acid degradation; L-alanine degradation via dehydrogenase pathway; NH(3) and pyruvate from L-alanine: step 1/1. Functionally, catalyzes the reversible oxidative deamination of L-alanine to pyruvate. Oxidative deamination proceeds through a sequential, ordered ternary-binary mechanism, where NAD(+) binds first followed by L-alanine; the products are released in the order ammonia, pyruvate and NADH. Disruption blocks sporulation probably in stage V; 20-30% sporulation can be restored if the media is supplemented with pyruvate, suggesting lack of pyruvate blocks sporulation. Thus it is a key factor in the assimilation of L-alanine as an energy source via the tricarboxylic acid cycle during sporulation. This is Alanine dehydrogenase from Bacillus subtilis (strain 168).